A 153-amino-acid chain; its full sequence is Riboflavin synthase (153 aa).

This sequence belongs to the DMRL synthase family.

It catalyses the reaction 2 6,7-dimethyl-8-(1-D-ribityl)lumazine + H(+) = 5-amino-6-(D-ribitylamino)uracil + riboflavin. It participates in cofactor biosynthesis; riboflavin biosynthesis; riboflavin from 2-hydroxy-3-oxobutyl phosphate and 5-amino-6-(D-ribitylamino)uracil: step 2/2. This Archaeoglobus fulgidus (strain ATCC 49558 / DSM 4304 / JCM 9628 / NBRC 100126 / VC-16) protein is Riboflavin synthase (ribC).